The primary structure comprises 2153 residues: RNA-directed RNA polymerase L (2153 aa).

Residues His-36, Glu-54, Asp-97, Glu-110, and Val-111 each contribute to the Mn(2+) site. The active-site For endonuclease activity is the Lys-124. One can recognise a RdRp catalytic domain in the interval 957–1143 (TGKSIKFKRK…AINQEMWKSM (187 aa)). Position 1100 (Asp-1100) interacts with Mg(2+).

Belongs to the Bunyavirales RNA polymerase family. In terms of assembly, interacts with the viral nucleoprotein. It depends on Mn(2+) as a cofactor. Mg(2+) is required as a cofactor.

The protein resides in the host cytoplasm. It localises to the host perinuclear region. It catalyses the reaction RNA(n) + a ribonucleoside 5'-triphosphate = RNA(n+1) + diphosphate. RNA-dependent RNA polymerase, which is responsible for the replication and transcription of the viral RNA genome using antigenomic RNA as an intermediate. During transcription, synthesizes subgenomic RNAs and assures their capping by a cap-snatching mechanism, which involves the endonuclease activity cleaving the host capped pre-mRNAs. These short capped RNAs are then used as primers for viral transcription. Cleaves ssRNA substrates but not DNA. Seems to downregulate the expression of its own and heterologous mRNAs through its endonuclease activity. The sequence is that of RNA-directed RNA polymerase L from Abrothrix longipilis (Long-haired grass mouse).